The following is a 235-amino-acid chain: Purine nucleoside phosphorylase DeoD-type (235 aa).

An a purine D-ribonucleoside-binding site is contributed by histidine 4. Residues glycine 20, arginine 24, arginine 43, and 87–90 each bind phosphate; that span reads RVGT. Residues glutamate 162, 179 to 181, and 203 to 204 contribute to the a purine D-ribonucleoside site; these read EME and SD. The active-site Proton donor is aspartate 204.

Belongs to the PNP/UDP phosphorylase family. As to quaternary structure, homohexamer; trimer of homodimers.

The enzyme catalyses a purine D-ribonucleoside + phosphate = a purine nucleobase + alpha-D-ribose 1-phosphate. It catalyses the reaction a purine 2'-deoxy-D-ribonucleoside + phosphate = a purine nucleobase + 2-deoxy-alpha-D-ribose 1-phosphate. Catalyzes the reversible phosphorolytic breakdown of the N-glycosidic bond in the beta-(deoxy)ribonucleoside molecules, with the formation of the corresponding free purine bases and pentose-1-phosphate. The chain is Purine nucleoside phosphorylase DeoD-type from Bacillus cytotoxicus (strain DSM 22905 / CIP 110041 / 391-98 / NVH 391-98).